The primary structure comprises 176 residues: Ribosome maturation factor RimM (176 aa).

The region spanning Glu97–Phe176 is the PRC barrel domain.

The protein belongs to the RimM family. Binds ribosomal protein uS19.

The protein resides in the cytoplasm. In terms of biological role, an accessory protein needed during the final step in the assembly of 30S ribosomal subunit, possibly for assembly of the head region. Essential for efficient processing of 16S rRNA. May be needed both before and after RbfA during the maturation of 16S rRNA. It has affinity for free ribosomal 30S subunits but not for 70S ribosomes. In Shewanella loihica (strain ATCC BAA-1088 / PV-4), this protein is Ribosome maturation factor RimM.